The sequence spans 318 residues: EFTTLFLLFSVLLLSASAEQCGSQAGGALCASGLCCSKFGWCGDTNDYCGPGNCQSQCPGGPGPSGDLGGVISNSMFDQMLNHRNDNACQGKGNFYSYNAFISAAGSFPGFGTTGDITARKREIAAFFAQTSHETTGGWPTAPDGPYAWGYCFLREQGSPGDYCTPSSQWPCAPGRKYFGRGPIQISHNYNYGPCGRAIGVDLLNNPDLVATDSVISFKSAIWFWMTPQSPKPSCHDVITGRWQPSGVDQAANRVPGFGVITNIINGGLECGHGSDSRVQDRIGFYRRYCGILGVSPGDNLDCGNQRSFGNGLLVDTM.

The signal sequence occupies residues 1 to 18 (EFTTLFLLFSVLLLSASA). The region spanning 19-60 (EQCGSQAGGALCASGLCCSKFGWCGDTNDYCGPGNCQSQCPG) is the Chitin-binding type-1 domain. 7 disulfide bridges follow: C21/C36, C30/C42, C35/C49, C54/C58, C89/C152, C164/C172, and C271/C303. E134 (proton donor) is an active-site residue. The propeptide at 312 to 318 (GLLVDTM) is removed in mature form, vacuolar targeting.

Belongs to the glycosyl hydrolase 19 family. Chitinase class I subfamily.

The protein localises to the vacuole. The enzyme catalyses Random endo-hydrolysis of N-acetyl-beta-D-glucosaminide (1-&gt;4)-beta-linkages in chitin and chitodextrins.. In terms of biological role, defense against chitin-containing fungal pathogens. The chain is Endochitinase 1 (CHTB1) from Solanum tuberosum (Potato).